We begin with the raw amino-acid sequence, 2946 residues long: Neurobeachin (2946 aa).

Residues 971–995 (ENIKKGKKGNVSTISGLSSQTTGAK) form a disordered region. The segment covering 980–993 (NVSTISGLSSQTTG) has biased composition (polar residues). 2 positions are modified to phosphoserine: serine 1011 and serine 1014. One copy of the WD 1 repeat lies at 1326–1368 (TTMFRIPEFKWSPMHQRLLTDLLFALETDVHVWRSHSTKSVMD). Disordered stretches follow at residues 1490 to 1531 (QRDR…LSPI), 1651 to 1675 (TIKE…HTDS), 1711 to 1731 (VKKS…PATS), and 1841 to 1860 (GAVD…VNGA). Polar residues predominate over residues 1497-1517 (SSHGSSKPQEVPQSVTATAAS). Position 1529 is a phosphoserine (serine 1529). Residues serine 1714 and serine 1717 each carry the phosphoserine modification. Residues 1716 to 1731 (ESLTENPSETLKPATS) are compositionally biased toward polar residues. The span at 1845-1855 (SGSSSSSSSSS) shows a compositional bias: low complexity. Serine 2138 carries the post-translational modification Phosphoserine. One can recognise a BEACH-type PH domain in the interval 2147–2255 (NLAGPVVLST…TVKKVVYSLP (109 aa)). The BEACH domain maps to 2274–2563 (ATPRQLYKSS…QLLIEPHPPR (290 aa)). Serine 2575 carries the post-translational modification Phosphoserine. WD repeat units lie at residues 2718 to 2761 (GHWD…HIIG), 2778 to 2818 (GHDH…RALE), 2860 to 2899 (EIND…QLYI), and 2902 to 2941 (GCDA…WHYE).

Belongs to the WD repeat neurobeachin family. Interacts with RII subunit of PKA. As to expression, predominant in many brain structures. Also expressed at medium levels in spleen, thymus, prostate, testis and ovary. Low level expression is seen in heart, kidney, pancreas, skeletal muscle and intestine.

The protein localises to the cytoplasm. Its subcellular location is the membrane. Its function is as follows. Binds to type II regulatory subunits of protein kinase A and anchors/targets them to the membrane. May anchor the kinase to cytoskeletal and/or organelle-associated proteins. The protein is Neurobeachin of Homo sapiens (Human).